The following is a 72-amino-acid chain: Cytochrome c oxidase copper chaperone 2 (72 aa).

Positions 32 and 33 each coordinate Cu cation. The region spanning 32-72 (CCACPDTKKLRDECIVEHGESACTKWIEAHILCLRSEGFKV) is the CHCH domain. 2 consecutive short sequence motifs (cx9C motif) follow at residues 35-45 (CPDTKKLRDEC) and 54-64 (CTKWIEAHILC). Cystine bridges form between cysteine 35–cysteine 64 and cysteine 45–cysteine 54.

The protein belongs to the COX17 family.

The protein localises to the mitochondrion intermembrane space. Its function is as follows. Copper chaperone for cytochrome c oxidase (COX). Binds 2 copper ions and delivers them to the Cu(A) site of COX. The sequence is that of Cytochrome c oxidase copper chaperone 2 (COX17-2) from Arabidopsis thaliana (Mouse-ear cress).